Consider the following 207-residue polypeptide: Adenine phosphoribosyltransferase (207 aa).

Residues 1 to 33 (MRPAKPPQSKERKRSKSLTSADHDNSPQRAETA) form a disordered region.

It belongs to the purine/pyrimidine phosphoribosyltransferase family. In terms of assembly, homodimer.

The protein resides in the cytoplasm. The catalysed reaction is AMP + diphosphate = 5-phospho-alpha-D-ribose 1-diphosphate + adenine. It functions in the pathway purine metabolism; AMP biosynthesis via salvage pathway; AMP from adenine: step 1/1. Its function is as follows. Catalyzes a salvage reaction resulting in the formation of AMP, that is energically less costly than de novo synthesis. The protein is Adenine phosphoribosyltransferase of Corynebacterium jeikeium (strain K411).